Reading from the N-terminus, the 161-residue chain is Nucleotide-binding protein Bpro_1596 (161 aa).

This sequence belongs to the YajQ family.

In terms of biological role, nucleotide-binding protein. This Polaromonas sp. (strain JS666 / ATCC BAA-500) protein is Nucleotide-binding protein Bpro_1596.